A 250-amino-acid polypeptide reads, in one-letter code: Tail assembly protein GT (250 aa).

This sequence belongs to the lambda-like tail assembly protein family. In terms of assembly, interacts (via C-terminus) with tail tube protein. Interacts (via N-terminus) with the tail assembly protein G and the tape measure protein.

It is found in the host cytoplasm. Its function is as follows. Promotes tail assembly by creating a scaffold for the tail tube proteins. Tail assembly proteins G and GT probably wrap the linear tape measure protein to create a tail assembly scaffold. This allows the polymerization of the tail tube protein, during which G and GT are released, therefore they are absent in the mature virion. The tail assembly protein GT is produced by a rare -1 ribosomal frameshift. The ratio of translated G/GT is about 20, and this ratio is important for proper tail assembly. This chain is Tail assembly protein GT, found in Escherichia coli (Bacteriophage N15).